A 297-amino-acid polypeptide reads, in one-letter code: Phosphoribosylaminoimidazole-succinocarboxamide synthase (297 aa).

This sequence belongs to the SAICAR synthetase family.

It catalyses the reaction 5-amino-1-(5-phospho-D-ribosyl)imidazole-4-carboxylate + L-aspartate + ATP = (2S)-2-[5-amino-1-(5-phospho-beta-D-ribosyl)imidazole-4-carboxamido]succinate + ADP + phosphate + 2 H(+). It functions in the pathway purine metabolism; IMP biosynthesis via de novo pathway; 5-amino-1-(5-phospho-D-ribosyl)imidazole-4-carboxamide from 5-amino-1-(5-phospho-D-ribosyl)imidazole-4-carboxylate: step 1/2. This is Phosphoribosylaminoimidazole-succinocarboxamide synthase from Methylococcus capsulatus (strain ATCC 33009 / NCIMB 11132 / Bath).